We begin with the raw amino-acid sequence, 384 residues long: Spermatogenesis-associated protein 32 (384 aa).

Positions 23-60 (RDDLSQHQIQEEQELEADMLEQKPQLQVDLDLDPDPDP) are disordered. Phosphoserine is present on residues serine 167 and serine 170. 3 disordered regions span residues 211 to 232 (DAHS…SSDL), 284 to 310 (VEER…LKSW), and 340 to 366 (LLQP…EKEN). A compositionally biased stretch (low complexity) spans 214–231 (SAPPTTSSQAPSPLLSSD). Residues 353–366 (SKEDSVPPGKEKEN) are compositionally biased toward basic and acidic residues.

As to quaternary structure, interacts with syntaxin-1 and ACTB. In terms of tissue distribution, detected in testis, and on the acrosomal cap of spermatids.

The sequence is that of Spermatogenesis-associated protein 32 (SPATA32) from Homo sapiens (Human).